We begin with the raw amino-acid sequence, 1497 residues long: DNA-directed RNA polymerase subunit beta (1497 aa).

This sequence belongs to the RNA polymerase beta chain family. The RNAP catalytic core consists of 2 alpha, 1 beta, 1 beta' and 1 omega subunit. When a sigma factor is associated with the core the holoenzyme is formed, which can initiate transcription.

It catalyses the reaction RNA(n) + a ribonucleoside 5'-triphosphate = RNA(n+1) + diphosphate. In terms of biological role, DNA-dependent RNA polymerase catalyzes the transcription of DNA into RNA using the four ribonucleoside triphosphates as substrates. In Trichlorobacter lovleyi (strain ATCC BAA-1151 / DSM 17278 / SZ) (Geobacter lovleyi), this protein is DNA-directed RNA polymerase subunit beta.